Consider the following 231-residue polypeptide: Orotidine 5'-phosphate decarboxylase (231 aa).

Residues Asp-11, Lys-33, 60-69 (DLKFHDIPNT), Thr-119, Arg-180, Gln-189, Gly-209, and Arg-210 contribute to the substrate site. Lys-62 serves as the catalytic Proton donor.

Belongs to the OMP decarboxylase family. Type 1 subfamily. As to quaternary structure, homodimer.

It carries out the reaction orotidine 5'-phosphate + H(+) = UMP + CO2. Its pathway is pyrimidine metabolism; UMP biosynthesis via de novo pathway; UMP from orotate: step 2/2. Its function is as follows. Catalyzes the decarboxylation of orotidine 5'-monophosphate (OMP) to uridine 5'-monophosphate (UMP). The chain is Orotidine 5'-phosphate decarboxylase from Idiomarina loihiensis (strain ATCC BAA-735 / DSM 15497 / L2-TR).